A 1045-amino-acid polypeptide reads, in one-letter code: Pre-mRNA-splicing factor ATP-dependent RNA helicase DHX16 (1045 aa).

The interval 101–211 is disordered; sequence EDSEESSEEA…ERSDKKAYEE (111 aa). Phosphoserine is present on residues serine 103, serine 106, and serine 107. Basic residues predominate over residues 119–131; the sequence is QKKRKKRKHLRKK. A compositionally biased stretch (acidic residues) spans 135–144; sequence EEEEEEEEEV. Phosphoserine is present on serine 164. The segment covering 170 to 211 has biased composition (basic and acidic residues); sequence RTERERLQDLEERDAFAERVRQRDKDRTRNVLERSDKKAYEE. Positions 413-577 constitute a Helicase ATP-binding domain; the sequence is LAAVANHQIL…FDDAPVFRIP (165 aa). An ATP-binding site is contributed by 426 to 433; the sequence is GETGSGKT. The DEAH box motif lies at 524–527; sequence DEAH. The 174-residue stretch at 602–775 folds into the Helicase C-terminal domain; sequence SVLQIHVTQP…NVVLLLKSLG (174 aa). The residue at position 716 (threonine 716) is a Phosphothreonine. The tract at residues 1026–1045 is disordered; it reads EDPHAKKMPKKTGKTREELG.

The protein belongs to the DEAD box helicase family. DEAH subfamily. DDX16/PRP8 sub-subfamily. As to quaternary structure, component of pre-catalytic spliceosome complexes. Component of the minor spliceosome, which splices U12-type introns. Interacts with GPKOW. Interacts with TRIM6. Interacts with RIGI.

It is found in the nucleus. It localises to the nucleoplasm. Its subcellular location is the cytoplasm. The enzyme catalyses ATP + H2O = ADP + phosphate + H(+). Required for pre-mRNA splicing as a component of the spliceosome. Contributes to pre-mRNA splicing after spliceosome formation and prior to the first transesterification reaction. As a component of the minor spliceosome, involved in the splicing of U12-type introns in pre-mRNAs. Also plays a role in innate antiviral response by acting as a pattern recognition receptor sensing splicing signals in viral RNA. Mechanistically, TRIM6 promotes the interaction between unanchored 'Lys-48'-polyubiquitin chains and DHX16, leading to DHX16 interaction with RIGI and ssRNA to amplify RIGI-dependent innate antiviral immune responses. This Sus scrofa (Pig) protein is Pre-mRNA-splicing factor ATP-dependent RNA helicase DHX16 (DHX16).